The chain runs to 176 residues: Large ribosomal subunit protein uL10 (176 aa).

The protein belongs to the universal ribosomal protein uL10 family. In terms of assembly, part of the ribosomal stalk of the 50S ribosomal subunit. The N-terminus interacts with L11 and the large rRNA to form the base of the stalk. The C-terminus forms an elongated spine to which L12 dimers bind in a sequential fashion forming a multimeric L10(L12)X complex.

Functionally, forms part of the ribosomal stalk, playing a central role in the interaction of the ribosome with GTP-bound translation factors. The protein is Large ribosomal subunit protein uL10 (rplJ) of Streptomyces antibioticus.